We begin with the raw amino-acid sequence, 360 residues long: S-adenosylmethionine:tRNA ribosyltransferase-isomerase (360 aa).

This sequence belongs to the QueA family. As to quaternary structure, monomer.

The protein resides in the cytoplasm. It carries out the reaction 7-aminomethyl-7-carbaguanosine(34) in tRNA + S-adenosyl-L-methionine = epoxyqueuosine(34) in tRNA + adenine + L-methionine + 2 H(+). Its pathway is tRNA modification; tRNA-queuosine biosynthesis. Transfers and isomerizes the ribose moiety from AdoMet to the 7-aminomethyl group of 7-deazaguanine (preQ1-tRNA) to give epoxyqueuosine (oQ-tRNA). The sequence is that of S-adenosylmethionine:tRNA ribosyltransferase-isomerase from Rhodopseudomonas palustris (strain TIE-1).